The sequence spans 163 residues: Large ribosomal subunit protein uL11 (163 aa).

The protein belongs to the universal ribosomal protein uL11 family. As to quaternary structure, part of the ribosomal stalk of the 50S ribosomal subunit. Interacts with L10 and the large rRNA to form the base of the stalk. L10 forms an elongated spine to which L12 dimers bind in a sequential fashion forming a multimeric L10(L12)X complex.

Forms part of the ribosomal stalk which helps the ribosome interact with GTP-bound translation factors. This chain is Large ribosomal subunit protein uL11, found in Thermococcus onnurineus (strain NA1).